A 398-amino-acid chain; its full sequence is S-adenosylmethionine synthase (398 aa).

ATP is bound at residue His16. Mg(2+) is bound at residue Asp18. Glu44 lines the K(+) pocket. L-methionine is bound by residues Glu57 and Gln100. Positions 100–110 (QSPDIAQGVNE) are flexible loop. Residues 175-177 (DAK), 242-243 (RF), Asp251, 257-258 (RK), Ala274, and Lys278 contribute to the ATP site. Position 251 (Asp251) interacts with L-methionine. Residue Lys282 participates in L-methionine binding.

Belongs to the AdoMet synthase family. Homotetramer; dimer of dimers. The cofactor is Mg(2+). K(+) serves as cofactor.

It is found in the cytoplasm. The enzyme catalyses L-methionine + ATP + H2O = S-adenosyl-L-methionine + phosphate + diphosphate. Its pathway is amino-acid biosynthesis; S-adenosyl-L-methionine biosynthesis; S-adenosyl-L-methionine from L-methionine: step 1/1. Catalyzes the formation of S-adenosylmethionine (AdoMet) from methionine and ATP. The overall synthetic reaction is composed of two sequential steps, AdoMet formation and the subsequent tripolyphosphate hydrolysis which occurs prior to release of AdoMet from the enzyme. The protein is S-adenosylmethionine synthase of Streptococcus agalactiae serotype III (strain NEM316).